Consider the following 461-residue polypeptide: Mannan endo-1,4-beta-mannosidase 4 (461 aa).

Substrate is bound by residues W80 and N195. E196 serves as the catalytic Proton donor. Y274 lines the substrate pocket. E314 functions as the Nucleophile in the catalytic mechanism. Residues W357 and D364 each contribute to the substrate site.

This sequence belongs to the glycosyl hydrolase 5 (cellulase A) family. Ubiquitous.

It carries out the reaction Random hydrolysis of (1-&gt;4)-beta-D-mannosidic linkages in mannans, galactomannans and glucomannans.. The chain is Mannan endo-1,4-beta-mannosidase 4 (MAN4) from Oryza sativa subsp. japonica (Rice).